Here is a 930-residue protein sequence, read N- to C-terminus: Isoleucine--tRNA ligase (930 aa).

A 'HIGH' region motif is present at residues 57–67 (PYANGNIHVGH). Position 554 (Glu-554) interacts with L-isoleucyl-5'-AMP. A 'KMSKS' region motif is present at residues 595–599 (KMSKS). Lys-598 is a binding site for ATP. Positions 888, 891, 908, and 911 each coordinate Zn(2+).

The protein belongs to the class-I aminoacyl-tRNA synthetase family. IleS type 1 subfamily. In terms of assembly, monomer. Requires Zn(2+) as cofactor.

It localises to the cytoplasm. The catalysed reaction is tRNA(Ile) + L-isoleucine + ATP = L-isoleucyl-tRNA(Ile) + AMP + diphosphate. In terms of biological role, catalyzes the attachment of isoleucine to tRNA(Ile). As IleRS can inadvertently accommodate and process structurally similar amino acids such as valine, to avoid such errors it has two additional distinct tRNA(Ile)-dependent editing activities. One activity is designated as 'pretransfer' editing and involves the hydrolysis of activated Val-AMP. The other activity is designated 'posttransfer' editing and involves deacylation of mischarged Val-tRNA(Ile). The protein is Isoleucine--tRNA ligase of Streptococcus pneumoniae serotype 19F (strain G54).